Here is a 407-residue protein sequence, read N- to C-terminus: Mitochondrial protein import protein mas5 (407 aa).

In terms of domain architecture, J spans Lys6–Gly68. Substrate-binding positions include Leu110 and Leu129–Leu131. The segment at Gly124–Arg207 adopts a CR-type zinc-finger fold. Zn(2+) contacts are provided by Cys137, Cys140, Cys153, Cys156, Cys179, Cys182, Cys195, and Cys198. 4 CXXCXGXG motif repeats span residues Cys137–Gly144, Cys153–Gly160, Cys179–Gly186, and Cys195–Lys202. Substrate is bound by residues Ile209–Leu210 and Val241–Phe243. Positions Val375–Gln407 are disordered. Cys404 is modified (cysteine methyl ester). Cys404 carries S-farnesyl cysteine lipidation. Residues Ala405–Gln407 constitute a propeptide, removed in mature form.

As to quaternary structure, homodimer.

The protein resides in the cytoplasm. It is found in the nucleus. In terms of biological role, probably involved in mitochondrial protein import. Plays a role in microtubule cytoskeleton organization. This is Mitochondrial protein import protein mas5 (mas5) from Schizosaccharomyces pombe (strain 972 / ATCC 24843) (Fission yeast).